We begin with the raw amino-acid sequence, 144 residues long: Large ribosomal subunit protein uL16 (144 aa).

It belongs to the universal ribosomal protein uL16 family. Part of the 50S ribosomal subunit.

Functionally, binds 23S rRNA and is also seen to make contacts with the A and possibly P site tRNAs. The chain is Large ribosomal subunit protein uL16 from Bacillus cytotoxicus (strain DSM 22905 / CIP 110041 / 391-98 / NVH 391-98).